Consider the following 119-residue polypeptide: MVKLAFPRELRLLTPNHFTFVFQQPQWAGTPHVTILGRLNTLGHPRVGLTVAKKHVKRAHERNRIKRLTRESFRLHQHALPTMDFVVIAKKGVADLDNHTLTEALEKLWRRHCRQSQSC.

Belongs to the RnpA family. In terms of assembly, consists of a catalytic RNA component (M1 or rnpB) and a protein subunit.

It carries out the reaction Endonucleolytic cleavage of RNA, removing 5'-extranucleotides from tRNA precursor.. In terms of biological role, RNaseP catalyzes the removal of the 5'-leader sequence from pre-tRNA to produce the mature 5'-terminus. It can also cleave other RNA substrates such as 4.5S RNA. The protein component plays an auxiliary but essential role in vivo by binding to the 5'-leader sequence and broadening the substrate specificity of the ribozyme. The chain is Ribonuclease P protein component from Sodalis glossinidius (strain morsitans).